Consider the following 492-residue polypeptide: High-affinity nickel transport protein (492 aa).

The Cytoplasmic portion of the chain corresponds to 1–24 (MLSRWTRRVNESRLAQRKLTLLGR). Residues 25 to 45 (AIALVVGELLFNAVCWIAAGI) form a helical membrane-spanning segment. Residues 46 to 50 (CFGKT) are Extracellular-facing. Residues 51–71 (DGILGLALLAWTIGLRHGLDA) traverse the membrane as a helical segment. The Cytoplasmic portion of the chain corresponds to 72–94 (DHISAIDNATRQLVSQGQLPITC). Residues 95–115 (GLFFSLGHSTIVIVVNVAIAV) traverse the membrane as a helical segment. The Extracellular segment spans residues 116–136 (SVDIYDKLDRVGSIGGIVGAA). The helical transmembrane segment at 137–157 (VSASFLFLIACLNIYFLVGAI) threads the bilayer. Residues 158–210 (KQRRSMKRRQALGLPPDEDEGDPSKIYGGGCMVRVVGPILRAVDRPWKMYPVG) are Cytoplasmic-facing. Residues 211–231 (VLFGFGFDTASSIALLAISAI) form a helical membrane-spanning segment. Over 232 to 239 (AQRGPNGD) the chain is Extracellular. Residues 240 to 260 (AISHGKIVILPFLFTAGMSLV) traverse the membrane as a helical segment. The Cytoplasmic segment spans residues 261–382 (DSLDSILMLY…AKANTMSSLS (122 aa)). The chain crosses the membrane as a helical span at residues 383 to 403 (IILTLLSILVALSISLIEIMG). At 404–439 (LIGDNCTQCQDAANDPDGGGLAGSWWRAWARANDQS) the chain is on the extracellular side. N408 is a glycosylation site (N-linked (GlcNAc...) asparagine). The chain crosses the membrane as a helical span at residues 440-460 (GYIGAAIVGCFAAILAGWYGA). The Cytoplasmic portion of the chain corresponds to 461-492 (KWGKKKWKARRDANAAIVLEDNEDDAAETPVA).

It belongs to the NiCoT transporter (TC 2.A.52) family.

The protein resides in the cell membrane. High-affinity nickel-specific transporter responsible for nickel uptake and required for high levels of activity of urease URE1. Does not transport cobalt. Plays a role in host brain invasion. The sequence is that of High-affinity nickel transport protein from Cryptococcus neoformans var. grubii serotype A (strain H99 / ATCC 208821 / CBS 10515 / FGSC 9487) (Filobasidiella neoformans var. grubii).